Consider the following 386-residue polypeptide: Outer membrane protein assembly factor BamB (386 aa).

A signal peptide spans 1–20; that stretch reads MKKLFNQVLVAAGVLALLAG. Cys-21 carries the N-palmitoyl cysteine lipid modification. Cys-21 is lipidated: S-diacylglycerol cysteine.

Belongs to the BamB family. As to quaternary structure, part of the Bam complex.

It is found in the cell outer membrane. In terms of biological role, part of the outer membrane protein assembly complex, which is involved in assembly and insertion of beta-barrel proteins into the outer membrane. This Vibrio cholerae serotype O1 (strain ATCC 39315 / El Tor Inaba N16961) protein is Outer membrane protein assembly factor BamB.